The following is a 371-amino-acid chain: Aspartate-semialdehyde dehydrogenase (371 aa).

NADP(+)-binding positions include 10 to 13 (RGMV), 37 to 38 (TS), and Gln-74. Residue Arg-103 coordinates phosphate. The Acyl-thioester intermediate role is filled by Cys-136. Gln-163 lines the substrate pocket. Ser-166 contacts NADP(+). Glu-243 is a binding site for substrate. A phosphate-binding site is contributed by Lys-246. Substrate is bound at residue Arg-270. The Proton acceptor role is filled by His-277. NADP(+) is bound at residue Gln-353.

This sequence belongs to the aspartate-semialdehyde dehydrogenase family. As to quaternary structure, homodimer.

It catalyses the reaction L-aspartate 4-semialdehyde + phosphate + NADP(+) = 4-phospho-L-aspartate + NADPH + H(+). The protein operates within amino-acid biosynthesis; L-lysine biosynthesis via DAP pathway; (S)-tetrahydrodipicolinate from L-aspartate: step 2/4. It participates in amino-acid biosynthesis; L-methionine biosynthesis via de novo pathway; L-homoserine from L-aspartate: step 2/3. Its pathway is amino-acid biosynthesis; L-threonine biosynthesis; L-threonine from L-aspartate: step 2/5. Catalyzes the NADPH-dependent formation of L-aspartate-semialdehyde (L-ASA) by the reductive dephosphorylation of L-aspartyl-4-phosphate. This chain is Aspartate-semialdehyde dehydrogenase, found in Haemophilus influenzae (strain ATCC 51907 / DSM 11121 / KW20 / Rd).